Consider the following 422-residue polypeptide: Serine--tRNA ligase (422 aa).

226–228 (TSE) provides a ligand contact to L-serine. Residues 257–259 (RRE) and Val-273 contribute to the ATP site. Glu-280 serves as a coordination point for L-serine. Residue 344–347 (ELTS) coordinates ATP. Residue Thr-379 coordinates L-serine.

This sequence belongs to the class-II aminoacyl-tRNA synthetase family. Type-1 seryl-tRNA synthetase subfamily. As to quaternary structure, homodimer. The tRNA molecule binds across the dimer.

It is found in the cytoplasm. The enzyme catalyses tRNA(Ser) + L-serine + ATP = L-seryl-tRNA(Ser) + AMP + diphosphate + H(+). The catalysed reaction is tRNA(Sec) + L-serine + ATP = L-seryl-tRNA(Sec) + AMP + diphosphate + H(+). It functions in the pathway aminoacyl-tRNA biosynthesis; selenocysteinyl-tRNA(Sec) biosynthesis; L-seryl-tRNA(Sec) from L-serine and tRNA(Sec): step 1/1. Its function is as follows. Catalyzes the attachment of serine to tRNA(Ser). Is also able to aminoacylate tRNA(Sec) with serine, to form the misacylated tRNA L-seryl-tRNA(Sec), which will be further converted into selenocysteinyl-tRNA(Sec). This chain is Serine--tRNA ligase, found in Corynebacterium glutamicum (strain ATCC 13032 / DSM 20300 / JCM 1318 / BCRC 11384 / CCUG 27702 / LMG 3730 / NBRC 12168 / NCIMB 10025 / NRRL B-2784 / 534).